Here is a 147-residue protein sequence, read N- to C-terminus: Large ribosomal subunit protein bL9 (147 aa).

The protein belongs to the bacterial ribosomal protein bL9 family.

Binds to the 23S rRNA. In Campylobacter fetus subsp. fetus (strain 82-40), this protein is Large ribosomal subunit protein bL9.